We begin with the raw amino-acid sequence, 61 residues long: Large ribosomal subunit protein bL32 (61 aa).

Positions 1-16 (MAVPRRKTSPSRRGMR) are enriched in basic residues. The disordered stretch occupies residues 1–61 (MAVPRRKTSP…RQVLKAKSDS (61 aa)). Residues 27-44 (YAEDKDSGELRRPHHLDL) show a composition bias toward basic and acidic residues.

It belongs to the bacterial ribosomal protein bL32 family.

This Nitrobacter winogradskyi (strain ATCC 25391 / DSM 10237 / CIP 104748 / NCIMB 11846 / Nb-255) protein is Large ribosomal subunit protein bL32.